The following is a 156-amino-acid chain: Methylated-DNA--protein-cysteine methyltransferase (156 aa).

The active-site Nucleophile; methyl group acceptor is the C120.

The protein belongs to the MGMT family.

The protein resides in the cytoplasm. It carries out the reaction a 6-O-methyl-2'-deoxyguanosine in DNA + L-cysteinyl-[protein] = S-methyl-L-cysteinyl-[protein] + a 2'-deoxyguanosine in DNA. It catalyses the reaction a 4-O-methyl-thymidine in DNA + L-cysteinyl-[protein] = a thymidine in DNA + S-methyl-L-cysteinyl-[protein]. Involved in the cellular defense against the biological effects of O6-methylguanine (O6-MeG) and O4-methylthymine (O4-MeT) in DNA. Repairs the methylated nucleobase in DNA by stoichiometrically transferring the methyl group to a cysteine residue in the enzyme. This is a suicide reaction: the enzyme is irreversibly inactivated. The chain is Methylated-DNA--protein-cysteine methyltransferase from Sulfurisphaera tokodaii (strain DSM 16993 / JCM 10545 / NBRC 100140 / 7) (Sulfolobus tokodaii).